Here is a 707-residue protein sequence, read N- to C-terminus: Alpha-hemolysin translocation ATP-binding protein HlyB (707 aa).

The Peptidase C39 domain occupies 3–125 (SCHKIDYGLY…ALYQGHIILI (123 aa)). His-83 is a catalytic residue. Residues 154-436 (FIETLVVSVF…LAQIWQDFQQ (283 aa)) enclose the ABC transmembrane type-1 domain. The next 5 helical transmembrane spans lie at 158-178 (LVVSVFLQLFALITPLFFQVV), 191-211 (LNVITVALSVVVVFEIILSGL), 269-289 (ALTSVLDLLFSLIFFAVMWYY), 295-315 (LVILFSLPCYAAWSVFISPIL), and 388-408 (VMIINLWLGAHLVISGDLSIG). Residues 468 to 703 (ITFRNIRFRY…PESLYSYLYQ (236 aa)) form the ABC transporter domain. 502–509 (GRSGSGKS) is a binding site for ATP.

It belongs to the ABC transporter superfamily. Protein-1 exporter (TC 3.A.1.109) family. As to quaternary structure, homodimer.

The protein localises to the cell inner membrane. Part of the ABC transporter complex HlyBD involved in hemolysin export. Transmembrane domains (TMD) form a pore in the inner membrane and the ATP-binding domain (NBD) is responsible for energy generation. The polypeptide is Alpha-hemolysin translocation ATP-binding protein HlyB (hlyB) (Escherichia coli).